A 113-amino-acid polypeptide reads, in one-letter code: U11-theraphotoxin-Hhn1k (113 aa).

The first 21 residues, methionine 1–alanine 21, serve as a signal peptide directing secretion. Positions aspartate 22–arginine 74 are excised as a propeptide. The interval glutamate 61 to aspartate 83 is disordered. 3 disulfides stabilise this stretch: cysteine 75–cysteine 90, cysteine 82–cysteine 95, and cysteine 89–cysteine 110.

This sequence belongs to the neurotoxin 14 (magi-1) family. 01 (HNTX-16) subfamily. In terms of tissue distribution, expressed by the venom gland.

The protein localises to the secreted. Probable ion channel inhibitor. This is U11-theraphotoxin-Hhn1k from Cyriopagopus hainanus (Chinese bird spider).